The following is a 259-amino-acid chain: Phosphate import ATP-binding protein PstB (259 aa).

Positions Ile-13–Ile-254 constitute an ABC transporter domain. Gly-45 to Ser-52 contributes to the ATP binding site.

Belongs to the ABC transporter superfamily. Phosphate importer (TC 3.A.1.7) family. In terms of assembly, the complex is composed of two ATP-binding proteins (PstB), two transmembrane proteins (PstC and PstA) and a solute-binding protein (PstS).

It is found in the cell inner membrane. It catalyses the reaction phosphate(out) + ATP + H2O = ADP + 2 phosphate(in) + H(+). Functionally, part of the ABC transporter complex PstSACB involved in phosphate import. Responsible for energy coupling to the transport system. The sequence is that of Phosphate import ATP-binding protein PstB from Albidiferax ferrireducens (strain ATCC BAA-621 / DSM 15236 / T118) (Rhodoferax ferrireducens).